Reading from the N-terminus, the 256-residue chain is MATTSAAVLNGLSSSFLTGGNKSQALLAAPLAARVGGAATPKRFTVLAAAAKKSWIPAVRGGGNLVDPEWLDGSLPGDYGFDPLGLGKDPAFLKWYREAELIHGRWAMAAVLGIFVGQAWSGIPWFEAGADPGAIAPFSFGTLLGTQLILMGWVESKRWVDFFDPDSQSVEWATPWSKTAENFANFTGEQGYPGGKFFDPLALAGTLNNGVYVPDTEKLERLKVAEIKHARLAMLAMLIFYFEAGQGKTPLGALGL.

The next 2 helical transmembrane spans lie at 106–126 and 134–154; these read WAMA…IPWF and AIAP…MGWV.

It belongs to the ELIP/psbS family.

The protein localises to the plastid. It is found in the chloroplast thylakoid membrane. The chain is Chlorophyll a-b binding protein CP24 10A, chloroplastic (CAP10A) from Solanum lycopersicum (Tomato).